The following is a 314-amino-acid chain: Putative SET domain-containing protein L222 (314 aa).

Positions 23 to 172 constitute an SET domain; the sequence is EYIQVIYQNP…ANTEITISYG (150 aa).

This sequence belongs to the class V-like SAM-binding methyltransferase superfamily.

This chain is Putative SET domain-containing protein L222, found in Acanthamoeba polyphaga mimivirus (APMV).